A 331-amino-acid polypeptide reads, in one-letter code: Polysaccharide lyase (331 aa).

The first 22 residues, 1–22 (MSLPLRLALLPTLLASASAFAA), serve as a signal peptide directing secretion. Cys-23 carries the N-palmitoyl cysteine lipid modification. Cys-23 carries the S-diacylglycerol cysteine lipid modification.

Belongs to the polysaccharide lyase 5 family.

It localises to the cell outer membrane. It carries out the reaction Eliminative cleavage of alginate to give oligosaccharides with 4-deoxy-alpha-L-erythro-hex-4-enuronosyl groups at their non-reducing ends and beta-D-mannuronate at their reducing end.. It catalyses the reaction [hyaluronan](n) = n 3-(4-deoxy-beta-D-gluc-4-enuronosyl)-N-acetyl-D-glucosamine + H2O. The catalysed reaction is Eliminative cleavage of (1-&gt;4)-beta-D-glucuronans to give oligosaccharides with 4-deoxy-beta-D-gluc-4-enuronosyl groups at their non-reducing ends. Complete degradation of glucuronans results in the formation of tetrasaccharides.. With respect to regulation, is inhibited by mono- and divalent cations as well as L-ascorbic acid 6-hexadecanoate. Functionally, polysaccharide lyase that catalyzes the depolymerization of several anionic polysaccharides via a beta-elimination mechanism. Exhibits broad substrate specificity, catalyzing the degradation of not only alginate and poly-beta-D-mannuronate (poly-ManA), but poly-beta-D-glucuronate (poly-GlcA or poly-GlcUA) and hyaluronate (HA) as well. The oligosaccharide products formed by enzymatic cleavage are comprised mainly of disaccharides, with a lower abundance of trimers and pentamers. Is not active on poly-D-galacturonate, heparin and heparin sulfate. The protein is Polysaccharide lyase of Stenotrophomonas maltophilia (strain K279a).